Consider the following 311-residue polypeptide: 4-hydroxy-3-methylbut-2-enyl diphosphate reductase (311 aa).

Cys-14 is a [4Fe-4S] cluster binding site. (2E)-4-hydroxy-3-methylbut-2-enyl diphosphate-binding residues include His-43 and His-76. Residues His-43 and His-76 each contribute to the dimethylallyl diphosphate site. Residues His-43 and His-76 each contribute to the isopentenyl diphosphate site. Cys-98 serves as a coordination point for [4Fe-4S] cluster. Residue His-126 coordinates (2E)-4-hydroxy-3-methylbut-2-enyl diphosphate. His-126 is a binding site for dimethylallyl diphosphate. Position 126 (His-126) interacts with isopentenyl diphosphate. Glu-128 acts as the Proton donor in catalysis. Thr-166 is a binding site for (2E)-4-hydroxy-3-methylbut-2-enyl diphosphate. A [4Fe-4S] cluster-binding site is contributed by Cys-196. Ser-224, Ser-225, Asn-226, and Ser-268 together coordinate (2E)-4-hydroxy-3-methylbut-2-enyl diphosphate. The dimethylallyl diphosphate site is built by Ser-224, Ser-225, Asn-226, and Ser-268. Isopentenyl diphosphate is bound by residues Ser-224, Ser-225, Asn-226, and Ser-268.

This sequence belongs to the IspH family. Requires [4Fe-4S] cluster as cofactor.

It carries out the reaction isopentenyl diphosphate + 2 oxidized [2Fe-2S]-[ferredoxin] + H2O = (2E)-4-hydroxy-3-methylbut-2-enyl diphosphate + 2 reduced [2Fe-2S]-[ferredoxin] + 2 H(+). The catalysed reaction is dimethylallyl diphosphate + 2 oxidized [2Fe-2S]-[ferredoxin] + H2O = (2E)-4-hydroxy-3-methylbut-2-enyl diphosphate + 2 reduced [2Fe-2S]-[ferredoxin] + 2 H(+). Its pathway is isoprenoid biosynthesis; dimethylallyl diphosphate biosynthesis; dimethylallyl diphosphate from (2E)-4-hydroxy-3-methylbutenyl diphosphate: step 1/1. It participates in isoprenoid biosynthesis; isopentenyl diphosphate biosynthesis via DXP pathway; isopentenyl diphosphate from 1-deoxy-D-xylulose 5-phosphate: step 6/6. Its function is as follows. Catalyzes the conversion of 1-hydroxy-2-methyl-2-(E)-butenyl 4-diphosphate (HMBPP) into a mixture of isopentenyl diphosphate (IPP) and dimethylallyl diphosphate (DMAPP). Acts in the terminal step of the DOXP/MEP pathway for isoprenoid precursor biosynthesis. This is 4-hydroxy-3-methylbut-2-enyl diphosphate reductase from Chromobacterium violaceum (strain ATCC 12472 / DSM 30191 / JCM 1249 / CCUG 213 / NBRC 12614 / NCIMB 9131 / NCTC 9757 / MK).